The following is a 503-amino-acid chain: AMP phosphorylase (503 aa).

AMP contacts are provided by residues Gly168, 194 to 199 (SRAITS), and Thr203. Residue Asp256 is the Proton donor of the active site. Residues Ser264 and Lys288 each coordinate AMP.

The protein belongs to the thymidine/pyrimidine-nucleoside phosphorylase family. Type 2 subfamily.

It catalyses the reaction AMP + phosphate = alpha-D-ribose 1,5-bisphosphate + adenine. The catalysed reaction is CMP + phosphate = cytosine + alpha-D-ribose 1,5-bisphosphate. The enzyme catalyses UMP + phosphate = alpha-D-ribose 1,5-bisphosphate + uracil. In terms of biological role, catalyzes the conversion of AMP and phosphate to adenine and ribose 1,5-bisphosphate (R15P). Exhibits phosphorylase activity toward CMP and UMP in addition to AMP. Functions in an archaeal AMP degradation pathway, together with R15P isomerase and RubisCO. The chain is AMP phosphorylase (deoA) from Pyrococcus abyssi (strain GE5 / Orsay).